The chain runs to 413 residues: Gamma-lactamase FDB1 (413 aa).

The Zn(2+) site is built by histidine 126, histidine 128, aspartate 130, histidine 131, histidine 211, aspartate 235, and histidine 323.

The protein belongs to the metallo-beta-lactamase superfamily.

It participates in xenobiotic degradation. Gamma-lactamase; part of the Fusarium detoxification of benzoxazolinone cluster involved in the degradation of benzoxazolinones produced by the host plant. Maize, wheat, and rye produce the 2 benzoxazinone phytoanticipins 2,4-dihy-droxy-7-methoxy-1,4-benzoxazin-3-one (DIMBOA) and 2,4-dihydroxy-1,4-benzoxazin-3-one (DIBOA) that, due to their inherent instability once released, spontaneously degrade to the more stable corresponding benzoxazolinones, 6-methoxy-2-benzoxazolinone (MBOA) and 2-benzoxazolinone (BOA), respectively. The first step in the detoxification of benzoxazolinones involves the hydrolysis of the cyclic ester bond of benzoxazolinones by the gamma-lactamase FDB1 to aminophenols. FDB1 is able to convert BOA into 2-aminophenol (2-AP), as well as MBOA into 5-methoxy-2-aminophenol (2-AMP). The N-malonyltransferase FDB2 then metabolizes aminophenols via N-malonylation to non-toxic malonamic acids. FDB2 converts 2-AP into N-(2-hydroxyphenyl) malonamic acid (HPMA) and 2-AMP into N-(2-hydroxy-4-methoxyphenyl) malonamic acid (HMPMA). The cluster also contains 2 transcription factors (FDB3 and FPSE_08121), an aldo-keto reductase (FPSE_08125) that possibly associates with a ketone component of BOA and MBOA degradation, an esterase (FPSE_08126), an acyl-CoA transferase (FPSE_08120), a solute carrier protein (FPSE_08119) and a transmembrane transporter (FPSE_08127) proposed to shuttle metabolites of benzoxazolinone degradation. In Fusarium pseudograminearum (strain CS3096) (Wheat and barley crown-rot fungus), this protein is Gamma-lactamase FDB1.